We begin with the raw amino-acid sequence, 529 residues long: ATP synthase F(1) complex catalytic subunit beta, mitochondrial (529 aa).

A mitochondrion-targeting transit peptide spans 1 to 46 (MLSLVGRVASASASGALRGLNPLAALPQAHLLLRTAPAGVHPARDY). Ser106 carries O-linked (GlcNAc) serine glycosylation. 3 positions are modified to N6-acetyllysine; alternate: Lys124, Lys133, and Lys161. 3 positions are modified to N6-succinyllysine; alternate: Lys124, Lys133, and Lys161. Residue Lys198 is modified to N6-acetyllysine. Residues Gly209, Val210, Gly211, Lys212, Thr213, and Val214 each contribute to the ADP site. Gly209 is a binding site for ATP. Positions 209, 210, 211, 212, and 213 each coordinate phosphate. The ATP site is built by Gly211, Lys212, Thr213, and Val214. Thr213 contacts Mg(2+). Glu238 is a Mg(2+) binding site. Arg239 contributes to the ATP binding site. An N6-acetyllysine; alternate mark is found at Lys259 and Lys264. N6-succinyllysine; alternate is present on residues Lys259 and Lys264. Thr312 carries the post-translational modification Phosphothreonine. Ser415 is subject to Phosphoserine. N6-acetyllysine is present on Lys426. The residue at position 433 (Ser433) is a Phosphoserine. N6-acetyllysine is present on residues Lys480 and Lys485. Lys522 is modified (N6-acetyllysine; alternate). At Lys522 the chain carries N6-succinyllysine; alternate. At Ser529 the chain carries Phosphoserine.

This sequence belongs to the ATPase alpha/beta chains family. As to quaternary structure, homotrimer. Component of the ATP synthase complex composed at least of ATP5F1A/subunit alpha, ATP5F1B/subunit beta, ATP5MC1/subunit c (homooctomer), MT-ATP6/subunit a, MT-ATP8/subunit 8, ATP5ME/subunit e, ATP5MF/subunit f, ATP5MG/subunit g, ATP5MK/subunit k, ATP5MJ/subunit j, ATP5F1C/subunit gamma, ATP5F1D/subunit delta, ATP5F1E/subunit epsilon, ATP5PF/subunit F6, ATP5PB/subunit b, ATP5PD/subunit d, ATP5PO/subunit OSCP. ATP synthase complex consists of a soluble F(1) head domain (subunits alpha(3) and beta(3)) - the catalytic core - and a membrane F(0) domain - the membrane proton channel (subunits c, a, 8, e, f, g, k and j). These two domains are linked by a central stalk (subunits gamma, delta, and epsilon) rotating inside the F1 region and a stationary peripheral stalk (subunits F6, b, d, and OSCP). Interacts with PPIF. Interacts with BCL2L1 isoform BCL-X(L); the interaction mediates the association of BCL2L1 isoform BCL-X(L) with the mitochondrial membrane F(1)F(0) ATP synthase and enhances neurons metabolic efficiency. Interacts with CLN5 and PPT1. Interacts with S100A1; this interaction increases F1-ATPase activity. Interacts with MTLN. Interacts with TTC5/STRAP; the interaction results in decreased mitochondrial ATP production.

It localises to the mitochondrion inner membrane. It catalyses the reaction ATP + H2O + 4 H(+)(in) = ADP + phosphate + 5 H(+)(out). Catalytic subunit beta, of the soluble F(1) head domain within the mitochondrial ATP synthase complex (F(1)F(0) ATP synthase or complex V) that produces ATP from ADP and phosphate inorganique in the presence of a proton gradient across the membrane which is generated by electron transport complexes of the respiratory chain. With the non-catalytic subunit alpha (ATP5F1A), forms the catalytic core in the F(1) domain. ATP synthase complex consist of two structural domains, F(1) - containing the extramembraneous catalytic core, and F(0) - containing the membrane proton channel, linked together by a central stalk and a peripheral stalk. During catalysis, ATP synthesis in the catalytic domain of F(1) is coupled via a rotary mechanism of the central stalk subunits to proton translocation. Its function is as follows. Catalytic subunit beta, of the mitochondrial membrane ATP synthase complex (F(1)F(0) ATP synthase or Complex V) that produces ATP from ADP in the presence of a proton gradient across the membrane which is generated by electron transport complexes of the respiratory chain. ATP synthase complex consist of a soluble F(1) head domain - the catalytic core - and a membrane F(1) domain - the membrane proton channel. These two domains are linked by a central stalk rotating inside the F(1) region and a stationary peripheral stalk. During catalysis, ATP synthesis in the catalytic domain of F(1) is coupled via a rotary mechanism of the central stalk subunits to proton translocation. In vivo, can only synthesize ATP although its ATP hydrolase activity can be activated artificially in vitro. With the subunit alpha (ATP5F1A), forms the catalytic core in the F(1) domain. This chain is ATP synthase F(1) complex catalytic subunit beta, mitochondrial, found in Rattus norvegicus (Rat).